A 719-amino-acid chain; its full sequence is Nucleolar complex protein 2 homolog (719 aa).

Residues 1–24 show a composition bias toward basic residues; that stretch reads MKLLKKSSSLKKGVTKRAKLQKKP. Disordered regions lie at residues 1–67, 86–136, and 643–719; these read MKLL…GMKK, LQQE…TKIK, and ALEN…SDED. Over residues 25–42 the composition is skewed to basic and acidic residues; it reads PSKDEASSSDEELAKLDG. A compositionally biased stretch (acidic residues) spans 89 to 130; it reads EDADLLNMEEDEDDDEEGEDNEDEEDEEEEEESDEDDDEEDD. Over residues 643-661 the composition is skewed to basic and acidic residues; it reads ALENSKKDDKKKKKEEEAA.

The protein belongs to the NOC2 family.

It localises to the nucleus. In terms of biological role, required for normal somatic gonad development and for regulation of germline development and proliferation. The protein is Nucleolar complex protein 2 homolog (pro-2) of Caenorhabditis briggsae.